The following is a 744-amino-acid chain: Protein zyg-11 homolog B (744 aa).

LRR repeat units follow at residues Leu185–Lys208, Met216–Leu236, and Lys237–Gln261.

The protein belongs to the zyg-11 family. As to quaternary structure, (Microbial infection) Interacts with SARS-COV-2 protein ORF10. Interacts with ELOC/Elongin C. Part of an E3 ubiquitin ligase complex including ZYG11B, CUL2 and Elongin BC. Post-translationally, (Microbial infection) Ubiquitinated; leading to proteasomal degradation in the presence of herpes simplex virus 1/HHV-1.

Its subcellular location is the cytoplasm. In terms of biological role, serves as substrate adapter subunit in the E3 ubiquitin ligase complex ZYG11B-CUL2-Elongin BC. Acts to target substrates bearing N-terminal degrons for proteasomal degradation with the first four residues of substrates being the key recognition elements. Prefers Nt-Gly but also has the capacity to recognize Nt-Ser, -Ala and -Cys. Involved in the clearance of proteolytic fragments generated by caspase cleavage during apoptosis since N-terminal glycine degrons are strongly enriched at caspase cleavage sites. Also important in the quality control of protein N-myristoylation in which N-terminal glycine degrons are conditionally exposed after a failure of N-myristoylation. In addition, plays a role in the amplification of cGAS to enhance innate immune response. Mechanistically, strengthens the processes of cGAS binding with dsDNA and assembling oligomers and also accelerates and stabilizes cGAS-DNA condensation, thereby enhancing production of antiviral IFNs and inflammatory cytokines. This is Protein zyg-11 homolog B from Homo sapiens (Human).